The sequence spans 102 residues: Protein C4 (102 aa).

Positions 1 to 27 (MRMGSLISTCLSSSKASSSARINDSST) are enriched in low complexity. 2 disordered regions span residues 1–35 (MRMG…PGQH) and 47–86 (RQTS…LTPR).

The protein belongs to the geminiviridae protein AC4/C4 family.

Its function is as follows. Pathogenicity determinant. May act as a suppressor of RNA-mediated gene silencing, also known as post-transcriptional gene silencing (PTGS), a mechanism of plant viral defense that limits the accumulation of viral RNAs. In Cynanchum acutum (Little mallow), this protein is Protein C4.